A 185-amino-acid polypeptide reads, in one-letter code: Ribosome-recycling factor (185 aa).

It belongs to the RRF family.

The protein resides in the cytoplasm. Functionally, responsible for the release of ribosomes from messenger RNA at the termination of protein biosynthesis. May increase the efficiency of translation by recycling ribosomes from one round of translation to another. This Actinobacillus succinogenes (strain ATCC 55618 / DSM 22257 / CCUG 43843 / 130Z) protein is Ribosome-recycling factor.